A 570-amino-acid polypeptide reads, in one-letter code: nebramycin 5' synthase (570 aa).

The segment at 1–354 is kae1-like; sequence MRVLGLNGWP…AAAAVAVELG (354 aa). Asp-12 serves as a coordination point for tobramycin. His-14 (proton acceptor) is an active-site residue. Residue Lys-39 participates in ATP binding. Positions 114, 118, and 137 each coordinate Fe cation. Carbamoyl adenylate is bound by residues Gln-139, Gly-168, and Glu-172. Tobramycin contacts are provided by Glu-172 and Asp-228. Positions 310 and 314 each coordinate carbamoyl adenylate. Asp-338 serves as a coordination point for Fe cation. The segment at 367–570 is yrdC-like; it reads GPEFSPDQVR…PYLVTKDLRH (204 aa). Residues Arg-418 and Arg-449 each contribute to the ATP site. 418 to 419 provides a ligand contact to carbamoyl phosphate; sequence RA. Carbamoyl phosphate-binding positions include Arg-498 and 528 to 530; that span reads NTS.

This sequence belongs to the NodU/CmcH family. Fe(2+) serves as cofactor.

It catalyses the reaction tobramycin + carbamoyl phosphate + ATP + H2O = nebramycin 5' + AMP + phosphate + diphosphate + H(+). The catalysed reaction is kanamycin A + carbamoyl phosphate + ATP + H2O = 6''-O-carbamoylkanamycin A + AMP + phosphate + diphosphate + H(+). The enzyme catalyses carbamoyl phosphate + ATP + H2O = carbamoyl adenylate + phosphate + diphosphate. It carries out the reaction tobramycin + carbamoyl adenylate = nebramycin 5' + AMP + H(+). It catalyses the reaction carbamoyl adenylate + kanamycin A = 6''-O-carbamoylkanamycin A + AMP + H(+). It functions in the pathway antibiotic biosynthesis; kanamycin biosynthesis. Its pathway is antibiotic biosynthesis; tobramycin biosynthesis. With respect to regulation, ADP inhibits the formation of nebramycin 5'. TobZ is involved in the biosynthesis of the 2-deoxystreptamine-containing aminoglycoside antibiotics such as nebramycin 5 and 6-O-carbamoylkanamycin. Catalyzes the hydrolysis of carbamoyl phosphate and its subsequent adenylation by ATP to yield O-carbamoyladenylate. Then it catalyzes the transfer of the carbamoyl moiety from O-carbamoyladenylate to the tobramycin 6-hydroxy group to yield nebramycin 5'. It catalyzes the same reaction with kanamycin A. These reactions are considerably slower in the presence of deoxy-ATP. The sequence is that of nebramycin 5' synthase (tobZ) from Streptoalloteichus tenebrarius (strain ATCC 17920 / DSM 40477 / JCM 4838 / CBS 697.72 / NBRC 16177 / NCIMB 11028 / NRRL B-12390 / A12253. 1 / ISP 5477) (Streptomyces tenebrarius).